Consider the following 78-residue polypeptide: Molt-inhibiting hormone (78 aa).

Intrachain disulfides connect cysteine 7–cysteine 44, cysteine 24–cysteine 40, and cysteine 27–cysteine 53.

The protein localises to the secreted. In terms of biological role, inhibits Y-organs where molting hormone (ecdysteroid) is secreted. A molting cycle is initiated when MIH secretion diminishes or stops. Also has significant hyperglycemic hormone (CHH) activity. This Cancer pagurus (Rock crab) protein is Molt-inhibiting hormone.